We begin with the raw amino-acid sequence, 248 residues long: Large ribosomal subunit protein uL1 (248 aa).

It belongs to the universal ribosomal protein uL1 family. As to quaternary structure, part of the 50S ribosomal subunit.

Functionally, binds directly to 23S rRNA. The L1 stalk is quite mobile in the ribosome, and is involved in E site tRNA release. In terms of biological role, protein L1 is also a translational repressor protein, it controls the translation of the L11 operon by binding to its mRNA. The protein is Large ribosomal subunit protein uL1 of Orientia tsutsugamushi (strain Boryong) (Rickettsia tsutsugamushi).